A 417-amino-acid chain; its full sequence is UPF0597 protein Cphy_1256 (417 aa).

This sequence belongs to the UPF0597 family.

In Lachnoclostridium phytofermentans (strain ATCC 700394 / DSM 18823 / ISDg) (Clostridium phytofermentans), this protein is UPF0597 protein Cphy_1256.